Here is a 663-residue protein sequence, read N- to C-terminus: 4-hydroxy-3-methylbut-2-en-1-yl diphosphate synthase (flavodoxin) (663 aa).

[4Fe-4S] cluster contacts are provided by cysteine 568, cysteine 571, cysteine 602, and glutamate 609.

It belongs to the IspG family. [4Fe-4S] cluster is required as a cofactor.

It catalyses the reaction (2E)-4-hydroxy-3-methylbut-2-enyl diphosphate + oxidized [flavodoxin] + H2O + 2 H(+) = 2-C-methyl-D-erythritol 2,4-cyclic diphosphate + reduced [flavodoxin]. It participates in isoprenoid biosynthesis; isopentenyl diphosphate biosynthesis via DXP pathway; isopentenyl diphosphate from 1-deoxy-D-xylulose 5-phosphate: step 5/6. Functionally, converts 2C-methyl-D-erythritol 2,4-cyclodiphosphate (ME-2,4cPP) into 1-hydroxy-2-methyl-2-(E)-butenyl 4-diphosphate. The sequence is that of 4-hydroxy-3-methylbut-2-en-1-yl diphosphate synthase (flavodoxin) from Leptospira borgpetersenii serovar Hardjo-bovis (strain JB197).